A 488-amino-acid chain; its full sequence is MQPTGPEGPRALSLRPLGHRLSLLGVLLIIPSLWVTCNQTTPSLSSAPTSPGASSAMTTPGIPNDTTTSGVTSDPRLREQALALMRDFPLVDGHNDLPLLLRELFQNKLQDVNLHNFTRGQTSLDRLRDGLVGAQFWSAYIPCQTQDRDAVRVALEQIDLIRRMCSAYPELELVTSADGLNSTQKLACLIGLEGGHSLDTSLAVLRSFYELGVRYLTLTFTCSTPWAESATKFRHHFYTNISGLTSFGEKVVEEMNRIGMMIDLSHASDTLVKQTLEASRAPVIFSHSAARSVCDNLLNVPDDILQLLKKNGGIVMVTLSMGVLQCSLLANVSTVADHFDHIRTVIGSEFIGIGGSYDGSGRFPQGLEDVSTYPVLLEELLRRGWGEQELQGVLRGNLLRVFRQVEQVREKSLGQSPVEVVFPERQQSSTCHSHLLPQSQDAHLKVTKLPSSQVLQRASKAPPCPLLGLVAAVTSPAFTLWLCCSGHR.

A signal peptide spans 1 to 35; it reads MQPTGPEGPRALSLRPLGHRLSLLGVLLIIPSLWV. A compositionally biased stretch (low complexity) spans 41-60; it reads TPSLSSAPTSPGASSAMTTP. The tract at residues 41-74 is disordered; that stretch reads TPSLSSAPTSPGASSAMTTPGIPNDTTTSGVTSD. Intrachain disulfides connect C143/C222 and C294/C326. The N-linked (GlcNAc...) asparagine glycan is linked to N331. Residue S459 is the site of GPI-anchor amidated serine attachment. The propeptide at 460–487 is removed in mature form; that stretch reads KAPPCPLLGLVAAVTSPAFTLWLCCSGH.

The protein belongs to the metallo-dependent hydrolases superfamily. Peptidase M19 family. As to quaternary structure, homodimer; disulfide-linked. Interacts with TEX101; co-localized on the cell surface of spermatocytes, spermatids, and testicular spermatozoa, co-localized only in cytoplasmic droplets of caput and corpus epididymal sperm.

It localises to the membrane. Lacks dipeptidase activity and is unable to hydrolyze cystinyl-bis-glycine, leukotriene D4 and the beta-lactam antibiotic imipenem. The absence of activity may be due to the inability of serine (instead of aspartate found in DPEP1/2) at position 356 to function as the acid/base catalyst and activate the nucleophilic water/hydroxide. The protein is Dipeptidase 3 (Dpep3) of Rattus norvegicus (Rat).